Reading from the N-terminus, the 300-residue chain is 33 kDa chaperonin (300 aa).

2 disulfide bridges follow: Cys-240/Cys-242 and Cys-273/Cys-276.

This sequence belongs to the HSP33 family. Under oxidizing conditions two disulfide bonds are formed involving the reactive cysteines. Under reducing conditions zinc is bound to the reactive cysteines and the protein is inactive.

The protein localises to the cytoplasm. In terms of biological role, redox regulated molecular chaperone. Protects both thermally unfolding and oxidatively damaged proteins from irreversible aggregation. Plays an important role in the bacterial defense system toward oxidative stress. The sequence is that of 33 kDa chaperonin from Cyanothece sp. (strain PCC 7425 / ATCC 29141).